Consider the following 249-residue polypeptide: 2,5-diamino-6-ribosylamino-4(3H)-pyrimidinone 5'-phosphate reductase (249 aa).

Residues Thr-79, Asp-83, Met-164, and Gly-187–Ile-191 contribute to the NADP(+) site.

This sequence belongs to the HTP reductase family. In terms of assembly, homodimer.

The catalysed reaction is 2,5-diamino-6-(1-D-ribitylamino)pyrimidin-4(3H)-one 5'-phosphate + NADP(+) = 2,5-diamino-6-(1-D-ribosylamino)pyrimidin-4(3H)-one 5'-phosphate + NADPH + H(+). The enzyme catalyses 2,5-diamino-6-(1-D-ribitylamino)pyrimidin-4(3H)-one 5'-phosphate + NAD(+) = 2,5-diamino-6-(1-D-ribosylamino)pyrimidin-4(3H)-one 5'-phosphate + NADH + H(+). It functions in the pathway cofactor biosynthesis; riboflavin biosynthesis. Catalyzes an early step in riboflavin biosynthesis, the NADPH-dependent reduction of the ribose side chain of 2,5-diamino-6-ribosylamino-4(3H)-pyrimidinone 5'-phosphate, yielding 2,5-diamino-6-ribitylamino-4(3H)-pyrimidinone 5'-phosphate. The sequence is that of 2,5-diamino-6-ribosylamino-4(3H)-pyrimidinone 5'-phosphate reductase (RIB7) from Kluyveromyces marxianus (Yeast).